The sequence spans 684 residues: Calpain-14 (684 aa).

Residues 43–336 (LFEDTSFPAT…FVLLVICKLT (294 aa)) enclose the Calpain catalytic domain. Residues C101, H254, and N278 contribute to the active site. Residues 337–503 (PGLLSQEAAQ…KHIFYEIGSN (167 aa)) form a domain III region. Residues 504–517 (SGVVFSKEIEDQNE) form a linker region. The domain IV stretch occupies residues 518 to 683 (RQDEFFTKFF…KPEWMMMALY (166 aa)). 3 consecutive EF-hand domains span residues 557–592 (FSLEACQGILALLDLNASGTMSIQEFRDLWKQLKLS), 586–621 (WKQLKLSQKVFHKQDRGSGYLNWEQLHAAMREAGIM), and 651–684 (LRVENMEDVFQNLTQDGKGIYLQKPEWMMMALYS). Ca(2+) is bound by residues D570, N572, S574, T576, and E581.

This sequence belongs to the peptidase C2 family. As to expression, not expressed in tissues tested.

Its function is as follows. Calcium-regulated non-lysosomal thiol-protease. This chain is Calpain-14 (CAPN14), found in Homo sapiens (Human).